The sequence spans 140 residues: Transmembrane protein 234 homolog (140 aa).

Transmembrane regions (helical) follow at residues 14 to 34 (IYAVLSILLVAIMWGATNPFI), 64 to 84 (WQYLLPLVINQLGSIVYVLTL), 88 to 108 (ELSLTVPMANSLTFVFTAITA), and 116 to 136 (SGWKIYCGMTLVILGTVICGL).

This sequence belongs to the TMEM234 family.

The protein resides in the membrane. The polypeptide is Transmembrane protein 234 homolog (Anopheles gambiae (African malaria mosquito)).